Here is a 310-residue protein sequence, read N- to C-terminus: NAD kinase 1 (310 aa).

Asp-68 functions as the Proton acceptor in the catalytic mechanism. NAD(+) is bound by residues 68–69, 145–146, Arg-156, His-175, and Asp-177; these read DG and NE.

It belongs to the NAD kinase family. It depends on a divalent metal cation as a cofactor.

Its subcellular location is the cytoplasm. The catalysed reaction is NAD(+) + ATP = ADP + NADP(+) + H(+). Functionally, involved in the regulation of the intracellular balance of NAD and NADP, and is a key enzyme in the biosynthesis of NADP. Catalyzes specifically the phosphorylation on 2'-hydroxyl of the adenosine moiety of NAD to yield NADP. The chain is NAD kinase 1 from Gloeobacter violaceus (strain ATCC 29082 / PCC 7421).